Here is a 398-residue protein sequence, read N- to C-terminus: Enolase (398 aa).

Position 154 (Q154) interacts with (2R)-2-phosphoglycerate. The active-site Proton donor is the E196. D232, E273, and D300 together coordinate Mg(2+). K325, R354, S355, and K376 together coordinate (2R)-2-phosphoglycerate. K325 (proton acceptor) is an active-site residue.

This sequence belongs to the enolase family. It depends on Mg(2+) as a cofactor.

It is found in the cytoplasm. The protein localises to the secreted. It localises to the cell surface. The enzyme catalyses (2R)-2-phosphoglycerate = phosphoenolpyruvate + H2O. It participates in carbohydrate degradation; glycolysis; pyruvate from D-glyceraldehyde 3-phosphate: step 4/5. Functionally, catalyzes the reversible conversion of 2-phosphoglycerate (2-PG) into phosphoenolpyruvate (PEP). It is essential for the degradation of carbohydrates via glycolysis. The sequence is that of Enolase from Halobacterium salinarum (strain ATCC 700922 / JCM 11081 / NRC-1) (Halobacterium halobium).